Here is a 265-residue protein sequence, read N- to C-terminus: Interleukin-1 alpha (265 aa).

Positions methionine 1–arginine 108 are excised as a propeptide. Lysine 78 is subject to N6-acetyllysine. The nuclear localization signal (NLS) stretch occupies residues lysine 78–leucine 82. Serine 83 is modified (phosphoserine). 2 N-linked (GlcNAc...) asparagine glycosylation sites follow: asparagine 98 and asparagine 137.

It belongs to the IL-1 family. As to quaternary structure, monomer. Interacts with TMED10; the interaction mediates the translocation from the cytoplasm into the ERGIC (endoplasmic reticulum-Golgi intermediate compartment) and thereby secretion. Interacts with IL1R1. Interacts with S100A13; this interaction is the first step in the export of IL1A, followed by direct translocation of this complex across the plasma membrane. Acetylated within its nuclear localization sequence, which impacts subcellular localization. Post-translationally, proteolytic processed by CAPN1 in a calcium-dependent manner. Cleavage from 31 kDa precursor to 18 kDa biologically active molecules. In terms of processing, phosphorylated. Phosphorylation greatly enhances susceptibility to digestion and promotes the conversion of pre-IL1A alpha to the biologically active IL1A.

It is found in the nucleus. Its subcellular location is the cytoplasm. The protein resides in the secreted. Cytokine constitutively present intracellularly in nearly all resting non-hematopoietic cells that plays an important role in inflammation and bridges the innate and adaptive immune systems. After binding to its receptor IL1R1 together with its accessory protein IL1RAP, forms the high affinity interleukin-1 receptor complex. Signaling involves the recruitment of adapter molecules such as MYD88, IRAK1 or IRAK4. In turn, mediates the activation of NF-kappa-B and the three MAPK pathways p38, p42/p44 and JNK pathways. Within the cell, acts as an alarmin and cell death results in its liberation in the extracellular space after disruption of the cell membrane to induce inflammation and alert the host to injury or damage. In addition to its role as a danger signal, which occurs when the cytokine is passively released by cell necrosis, directly senses DNA damage and acts as signal for genotoxic stress without loss of cell integrity. The protein is Interleukin-1 alpha (IL1A) of Canis lupus familiaris (Dog).